A 131-amino-acid chain; its full sequence is L-aspartate semialdehyde sulfurtransferase iron-sulfur subunit (131 aa).

4Fe-4S ferredoxin-type domains follow at residues 73–102 and 103–131; these read KVIK…MDED and YNVV…EIFE. The [4Fe-4S] cluster site is built by Cys-82, Cys-85, Cys-88, Cys-92, Cys-112, Cys-115, Cys-118, and Cys-122.

In terms of assembly, may form a complex with MJ0100. [4Fe-4S] cluster serves as cofactor.

Its pathway is amino-acid biosynthesis. In terms of biological role, required for O-acetylhomoserine sulfhydrylase (OAHS)-independent homocysteine (Hcy) biosynthesis. Together with MJ0100, catalyzes the condensation of sulfide with aspartate semialdehyde to generate homocysteine. May be involved in the reduction of the disulfide formed in MJ0100. This is L-aspartate semialdehyde sulfurtransferase iron-sulfur subunit from Methanocaldococcus jannaschii (strain ATCC 43067 / DSM 2661 / JAL-1 / JCM 10045 / NBRC 100440) (Methanococcus jannaschii).